Reading from the N-terminus, the 108-residue chain is Iron-sulfur cluster assembly protein CyaY (108 aa).

This sequence belongs to the frataxin family.

In terms of biological role, involved in iron-sulfur (Fe-S) cluster assembly. May act as a regulator of Fe-S biogenesis. The polypeptide is Iron-sulfur cluster assembly protein CyaY (Burkholderia cenocepacia (strain ATCC BAA-245 / DSM 16553 / LMG 16656 / NCTC 13227 / J2315 / CF5610) (Burkholderia cepacia (strain J2315))).